A 135-amino-acid chain; its full sequence is Ribonuclease VapC5 (135 aa).

In terms of domain architecture, PINc spans 9–130 (VLDTSVFIAT…FAALDGAASV (122 aa)). Mg(2+) contacts are provided by aspartate 11 and aspartate 100.

The protein belongs to the PINc/VapC protein family. As to quaternary structure, forms a complex with VapB5. The cofactor is Mg(2+).

The protein localises to the secreted. Probable toxic component of a type II toxin-antitoxin (TA) system. The cognate antitoxin is VapB5. Has limited RNase activity on substrates; activity is seen with a VapC5-VapB5 complex. The polypeptide is Ribonuclease VapC5 (Mycobacterium tuberculosis (strain ATCC 25618 / H37Rv)).